The primary structure comprises 686 residues: Methionine--tRNA ligase (686 aa).

Positions 15-25 match the 'HIGH' region motif; that stretch reads PYANGSIHLGH. Residues Cys-146, Cys-149, Cys-159, and Cys-162 each coordinate Zn(2+). The short motif at 332 to 336 is the 'KMSKS' region element; sequence KMSKS. ATP is bound at residue Lys-335. The 102-residue stretch at 585–686 folds into the tRNA-binding domain; the sequence is AFEAVDMRIA…EGAQPGMRVM (102 aa).

The protein belongs to the class-I aminoacyl-tRNA synthetase family. MetG type 1 subfamily. In terms of assembly, homodimer. Zn(2+) is required as a cofactor.

It localises to the cytoplasm. The catalysed reaction is tRNA(Met) + L-methionine + ATP = L-methionyl-tRNA(Met) + AMP + diphosphate. Is required not only for elongation of protein synthesis but also for the initiation of all mRNA translation through initiator tRNA(fMet) aminoacylation. The chain is Methionine--tRNA ligase from Aliivibrio fischeri (strain ATCC 700601 / ES114) (Vibrio fischeri).